Here is a 76-residue protein sequence, read N- to C-terminus: Putative antitoxin VapB2 (76 aa).

This sequence belongs to the UPF0330 family.

Possibly the antitoxin component of a type II toxin-antitoxin (TA) system. Its cognate toxin is VapC2 (Potential). This Pyrococcus abyssi (strain GE5 / Orsay) protein is Putative antitoxin VapB2 (vapB2).